We begin with the raw amino-acid sequence, 121 residues long: Large ribosomal subunit protein bL20 (121 aa).

It belongs to the bacterial ribosomal protein bL20 family.

Functionally, binds directly to 23S ribosomal RNA and is necessary for the in vitro assembly process of the 50S ribosomal subunit. It is not involved in the protein synthesizing functions of that subunit. This Sphingopyxis alaskensis (strain DSM 13593 / LMG 18877 / RB2256) (Sphingomonas alaskensis) protein is Large ribosomal subunit protein bL20.